The chain runs to 362 residues: 3-isopropylmalate dehydrogenase (362 aa).

77 to 88 contributes to the NAD(+) binding site; it reads GPKWGTGAVRPE. Substrate-binding residues include Arg95, Arg105, Arg134, and Asp223. Residues Asp223, Asp248, and Asp252 each contribute to the Mg(2+) site. Residue 287-298 coordinates NAD(+); it reads GSAPDLPPNKVN.

Belongs to the isocitrate and isopropylmalate dehydrogenases family. Homodimer. Mg(2+) serves as cofactor. The cofactor is Mn(2+).

Its subcellular location is the cytoplasm. The catalysed reaction is (2R,3S)-3-isopropylmalate + NAD(+) = 4-methyl-2-oxopentanoate + CO2 + NADH. The protein operates within amino-acid biosynthesis; L-leucine biosynthesis; L-leucine from 3-methyl-2-oxobutanoate: step 3/4. Functionally, catalyzes the oxidation of 3-carboxy-2-hydroxy-4-methylpentanoate (3-isopropylmalate) to 3-carboxy-4-methyl-2-oxopentanoate. The product decarboxylates to 4-methyl-2 oxopentanoate. The sequence is that of 3-isopropylmalate dehydrogenase (LEU2) from Blastobotrys adeninivorans (Yeast).